The following is a 344-amino-acid chain: N-acetyl-gamma-glutamyl-phosphate reductase (344 aa).

The active site involves Cys-147.

It belongs to the NAGSA dehydrogenase family. Type 1 subfamily.

Its subcellular location is the cytoplasm. The catalysed reaction is N-acetyl-L-glutamate 5-semialdehyde + phosphate + NADP(+) = N-acetyl-L-glutamyl 5-phosphate + NADPH + H(+). Its pathway is amino-acid biosynthesis; L-arginine biosynthesis; N(2)-acetyl-L-ornithine from L-glutamate: step 3/4. In terms of biological role, catalyzes the NADPH-dependent reduction of N-acetyl-5-glutamyl phosphate to yield N-acetyl-L-glutamate 5-semialdehyde. The sequence is that of N-acetyl-gamma-glutamyl-phosphate reductase from Bacillus amyloliquefaciens (Bacillus velezensis).